The chain runs to 342 residues: CMP-N-acetylneuraminate-beta-galactosamide-alpha-2,3-sialyltransferase 1 (342 aa).

Residues 1–10 (MVTVRKRNVK) are Cytoplasmic-facing. Residues 11–28 (VFTFAFVLITVTSFLLNY) traverse the membrane as a helical; Signal-anchor for type II membrane protein segment. The Lumenal portion of the chain corresponds to 29 to 342 (KHQVTMTTWD…IEKIKFFKGR (314 aa)). Cystine bridges form between cysteine 61-cysteine 66, cysteine 63-cysteine 141, and cysteine 144-cysteine 283. A glycan (N-linked (GlcNAc...) asparagine) is linked at asparagine 81. Substrate is bound at residue glutamine 107. Asparagine 116 is a glycosylation site (N-linked (GlcNAc...) asparagine). The substrate site is built by asparagine 149 and asparagine 172. Residues asparagine 203 and asparagine 229 are each glycosylated (N-linked (GlcNAc...) asparagine). Residues tyrosine 232, tyrosine 268, glycine 272, glycine 292, and histidine 301 each contribute to the substrate site. Residue asparagine 306 is glycosylated (N-linked (GlcNAc...) asparagine). Histidine 318 is a binding site for substrate. Asparagine 325 is a glycosylation site (N-linked (GlcNAc...) asparagine).

Belongs to the glycosyltransferase 29 family. The soluble form derives from the membrane form by proteolytic processing.

It localises to the golgi apparatus. It is found in the golgi stack membrane. The protein resides in the secreted. The enzyme catalyses a beta-D-galactosyl-(1-&gt;3)-N-acetyl-alpha-D-galactosaminyl derivative + CMP-N-acetyl-beta-neuraminate = an N-acetyl-alpha-neuraminyl-(2-&gt;3)-beta-D-galactosyl-(1-&gt;3)-N-acetyl-alpha-D-galactosaminyl derivative + CMP + H(+). The protein operates within protein modification; protein glycosylation. Responsible for the synthesis of the sequence NeuAc-alpha-2,3-Gal-beta-1,3-GalNAc- found on sugar chains O-linked to Thr or Ser and also as a terminal sequence on certain gangliosides. SIAT4A and SIAT4B sialylate the same acceptor substrates but exhibit different Km values. The protein is CMP-N-acetylneuraminate-beta-galactosamide-alpha-2,3-sialyltransferase 1 (ST3GAL1) of Gallus gallus (Chicken).